Consider the following 414-residue polypeptide: MTQANLSETLFKPRFKHTETSTLVRRFNRGSQPPMQSALDGKNVPHWYRMINRLMWIWRGVDPREILDVQARIVMSDAERTDDDLYDTVIGYRGGNWIYEWAKQAMDWQQKACQEQDAMRSGRYWLHASTLYNIAAYPHLKGDELAEQAQALANRAYEEAAQRLPGSLREMEFAVPGGSPVTAFLHMPKGDGPFPTVLMCGGLDAMQIDYYTLYERYFAPRGIAMLTLDMPSVGFSSKWKLTQDSSLLHQHVLKALPNVPWVDHTRVAAFGFRFGANVAVRLAYLEAPRLKAVACLGPVVHALLSDPQRQSTVPEMYLDVLASRLGMHDASDEALRVELNRYSLKVQGLLGRRCPTPMLSGFWKNDPFSPEEESRLITTSSSDGKLIEIPFNPVYRNFDHALQEITDWINHRLC.

Belongs to the FrsA family.

It carries out the reaction a carboxylic ester + H2O = an alcohol + a carboxylate + H(+). Its function is as follows. Catalyzes the hydrolysis of esters. The polypeptide is Esterase FrsA (Salmonella typhi).